The following is a 660-amino-acid chain: Sodium/nucleoside cotransporter 2 (660 aa).

Ser-46 carries the post-translational modification Phosphoserine. 14 consecutive transmembrane segments (helical) span residues 82–102, 106–125, 150–168, 174–194, 202–222, 235–255, 262–282, 297–316, 338–357, 364–383, 425–445, 456–476, 531–551, and 569–589; these read ILLG…CILN, ALAL…CHFL, KRVF…LALD, EQLI…ACSK, RTVF…IRTE, IQIF…DTLV, QSLP…YLGL, TMGT…FVGM, VMTG…FISF, LISA…KLVY, VAAN…TLSW, SFQV…GVQW, TTFS…LGGL, and ALFT…ILYV.

Belongs to the concentrative nucleoside transporter (CNT) (TC 2.A.41) family.

The protein resides in the membrane. Its subcellular location is the apicolateral cell membrane. The catalysed reaction is adenosine(out) + Na(+)(out) = adenosine(in) + Na(+)(in). It carries out the reaction inosine(out) + Na(+)(out) = inosine(in) + Na(+)(in). The enzyme catalyses guanosine(out) + Na(+)(out) = guanosine(in) + Na(+)(in). It catalyses the reaction uridine(out) + Na(+)(out) = uridine(in) + Na(+)(in). In terms of biological role, sodium-dependent and purine-selective transporter. Exhibits the transport characteristics of the nucleoside transport system cif or N1 subtype (N1/cif) (selective for purine nucleosides and uridine). Plays a critical role in specific uptake and salvage of purine nucleosides in kidney and other tissues. May contribute to regulate the transport of organic compounds in testes across the blood-testis-barrier. This is Sodium/nucleoside cotransporter 2 (Slc28a2) from Mus musculus (Mouse).